Consider the following 365-residue polypeptide: Putative nudix hydrolase 1 (365 aa).

The 130-residue stretch at 72-201 (VNYVAAAIIL…DFIRLVDEAV (130 aa)) folds into the Nudix hydrolase domain. The Nudix box signature appears at 109-130 (GRVEAGETIEEAVVREVKEETG). Mg(2+) is bound by residues E124 and E128.

The protein belongs to the Nudix hydrolase family. Requires Mg(2+) as cofactor. Mn(2+) is required as a cofactor.

Probably mediates the hydrolysis of some nucleoside diphosphate derivatives. This Caenorhabditis elegans protein is Putative nudix hydrolase 1 (ndx-1).